A 365-amino-acid chain; its full sequence is Saoe class I histocompatibility antigen, C alpha chain (365 aa).

The first 24 residues, 1–24, serve as a signal peptide directing secretion; that stretch reads MTIMAPRTLLLLLSGALSVTETWA. The interval 25-114 is alpha-1; the sequence is GSHSMRYFST…LLGYYNQSEA (90 aa). The Extracellular portion of the chain corresponds to 25–308; the sequence is GSHSMRYFST…EPPSQPTIPI (284 aa). N-linked (GlcNAc...) asparagine glycosylation is present at Asn-110. The tract at residues 115 to 206 is alpha-2; it reads GFHTIQWMYG…ENGKEMLQRA (92 aa). Disulfide bonds link Cys-125–Cys-188 and Cys-227–Cys-283. Residues 207–298 are alpha-3; that stretch reads EPPKTHVTHH…GLPEPFTLRW (92 aa). One can recognise an Ig-like C1-type domain in the interval 209 to 297; that stretch reads PKTHVTHHPV…EGLPEPFTLR (89 aa). Residues 299–308 form a connecting peptide region; that stretch reads EPPSQPTIPI. The helical transmembrane segment at 309–332 threads the bilayer; that stretch reads MGIVAILAILGAVVTGAVVAAVMW. The Cytoplasmic portion of the chain corresponds to 333–365; it reads RKKSSDKKGGSYSQAARSDSAQGSDVSLTACKV. Positions 337-365 are disordered; sequence SDKKGGSYSQAARSDSAQGSDVSLTACKV. The segment covering 346–359 has biased composition (polar residues); that stretch reads QAARSDSAQGSDVS. Phosphoserine occurs at positions 356 and 359.

The protein belongs to the MHC class I family. In terms of assembly, heterodimer of an alpha chain and a beta chain (beta-2-microglobulin).

The protein resides in the membrane. Its function is as follows. Involved in the presentation of foreign antigens to the immune system. This is Saoe class I histocompatibility antigen, C alpha chain from Saguinus oedipus (Cotton-top tamarin).